Here is a 946-residue protein sequence, read N- to C-terminus: Zinc finger protein rotund (946 aa).

Disordered stretches follow at residues 10–30 (GPQL…GHSD) and 156–269 (FRKP…HNLN). Polar residues predominate over residues 161 to 176 (NNNGYSWSTGNNNEVV). The span at 177–188 (SHSSNGHTNNHP) shows a compositional bias: low complexity. 2 stretches are compositionally biased toward polar residues: residues 198–230 (ASAT…SIKS) and 242–269 (TCKS…HNLN). C2H2-type zinc fingers lie at residues 488 to 510 (YQCK…TQIH), 517 to 539 (YKCT…TRIH), 545 to 567 (YRCE…IRTH), 573 to 597 (YKCR…SRCH), 603 to 625 (FKCN…IPKH), and 634 to 656 (HICQ…MQKH). Residues 683–853 (GGSANPANGP…TPSAVGPYDA (171 aa)) form a disordered region. Low complexity-rich tracts occupy residues 739-762 (HQQQ…QQQQ) and 770-790 (HGVP…QQQQ). Positions 813–822 (TAPNGSQSNG) are enriched in polar residues. Basic and acidic residues predominate over residues 828–841 (QPHHRMPDPVREDI).

It belongs to the krueppel C2H2-type zinc-finger protein family. Interacts with nab; which acts as a corepressor. In terms of tissue distribution, isoform rn and isoform roe are expressed in non-overlapping domains in the larval imaginal disks. Isoform rn is first expressed during the early third larval instar in the leg, wing, haltere and antennal part of the eye-antennal imaginal disk. It is observed as a ring in the leg and antenna disks and in the presumptive wing pouch and capitellum of wing and haltere disks respectively. In wing disk it is expressed in 3 concentric domains in the wing pouch. In late third instar, expression of isoform rn in the leg disk is no longer evident, but is maintained in the other disks. Isoform roe appears in the third instar and is confined to the eye part of the eye-antennal imaginal disk in a band of 4-6 cells at the morphogenetic furrow. There is no evidence of roe expression in other imaginal disks.

It is found in the nucleus. Its function is as follows. Transcription factor involved in imaginal disks development. Isoform rn is required in the wings, antenna, haltere, proboscis and legs disks, while isoform roe is required in the eye disk. Together with nab corepressor, it is involved in the initiation and maintenance of wingless (wg) expression in the wing hinge, by limiting the expression of wg to this compartment. Also required for the epithelial-mesenchymal transition branch of basolateral junctions signaling. The chain is Zinc finger protein rotund from Drosophila melanogaster (Fruit fly).